The primary structure comprises 565 residues: Adenine deaminase 1 (565 aa).

The protein belongs to the metallo-dependent hydrolases superfamily. Adenine deaminase family. Mn(2+) is required as a cofactor.

The catalysed reaction is adenine + H2O + H(+) = hypoxanthine + NH4(+). The sequence is that of Adenine deaminase 1 from Rhizobium meliloti (strain 1021) (Ensifer meliloti).